The primary structure comprises 181 residues: MQIVILREEIEIPKNVVVDLKGSIIKIKGPKGEVVKDFSFAKGIQISLDGNKIVLETTFANRRKKAVFYSIVSHIKNMITGVTKGYRYYLKIIYTHFPTSVKVVGNEVQITNLIGEKNTRRAQILEGVKVTVKGEDIVVEGPNLEAVAQTAANIESASKISGFDRRIFSDGIFIYKKEVIE.

This sequence belongs to the universal ribosomal protein uL6 family. Part of the 50S ribosomal subunit.

Its function is as follows. This protein binds to the 23S rRNA, and is important in its secondary structure. It is located near the subunit interface in the base of the L7/L12 stalk, and near the tRNA binding site of the peptidyltransferase center. The chain is Large ribosomal subunit protein uL6 from Saccharolobus solfataricus (strain ATCC 35092 / DSM 1617 / JCM 11322 / P2) (Sulfolobus solfataricus).